The primary structure comprises 212 residues: Fe/S biogenesis protein NfuA (212 aa).

[4Fe-4S] cluster-binding residues include Cys-169 and Cys-172.

Belongs to the NfuA family. Homodimer. Requires [4Fe-4S] cluster as cofactor.

Involved in iron-sulfur cluster biogenesis. Binds a 4Fe-4S cluster, can transfer this cluster to apoproteins, and thereby intervenes in the maturation of Fe/S proteins. Could also act as a scaffold/chaperone for damaged Fe/S proteins. This is Fe/S biogenesis protein NfuA from Acinetobacter baylyi (strain ATCC 33305 / BD413 / ADP1).